Here is a 1706-residue protein sequence, read N- to C-terminus: Cadherin-99C (1706 aa).

The first 28 residues, 1-28 (MAARNSLTPQQGLGFFGLLILLCSAVLG), serve as a signal peptide directing secretion. The Extracellular segment spans residues 29 to 1395 (KSQMCEVETG…AIDNEVFPFT (1367 aa)). 11 consecutive Cadherin domains span residues 68–142 (DPDT…APRF), 143–264 (MNTP…DPSF), 277–387 (INPE…PPVI), 388–500 (SSSQ…APKL), 519–604 (VTQV…PPRF), 605–704 (QKPI…NPEF), 707–807 (STLP…VPKF), 808–908 (SDAR…PPRF), 909–1005 (ITVP…RVDV), 1038–1148 (SDDS…APEF), and 1156–1270 (QQDT…ALSF). Asn105 and Asn188 each carry an N-linked (GlcNAc...) asparagine glycan. N-linked (GlcNAc...) asparagine glycosylation is found at Asn442, Asn553, Asn620, and Asn753. N-linked (GlcNAc...) asparagine glycans are attached at residues Asn1053, Asn1088, and Asn1108. 2 N-linked (GlcNAc...) asparagine glycosylation sites follow: Asn1311 and Asn1367. Residues 1396-1416 (LIAISLVILILGTIGIIYICI) traverse the membrane as a helical segment. At 1417–1706 (SWSKYKNFKQ…RSEVETTTEL (290 aa)) the chain is on the cytoplasmic side.

In terms of assembly, interacts (via the cytoplasmic domain) with ck. Interacts (via the cytoplasmic domain) with Cul1 and Ubr3.

The protein resides in the apical cell membrane. It is found in the endosome membrane. Its subcellular location is the cell projection. The protein localises to the microvillus membrane. In terms of biological role, cadherin that functions in epithelial morphogenesis and the intestine epithelial immune response. Essential for female fertility. Regulates the length and organization of apical microvilli in developing follicle cells and salivary glands. Function in the follicle cell is essential for egg development as the microvilli secrete eggshell material such as the vitelline membrane. Acts at least in part by regulating the recruitment of the myosin ck to the follicle cell microvilli. Also required to regulate cell rearrangements during salivary tube elongation, possibly by modulating cellular adhesion between the apical surface and apical extracellular matrix during epithelial tube elongation. May also function in cellular adhesion during the development of other tubular epithelia such as the trachea. Possibly functions as an apical membrane determinant which acts in apical membrane expansion during salivary and tracheal epithelial tube elongation. In salivary gland development, this function is independent of the other apical membrane determinants crb and sas. Essential downstream component of a hh-signaling pathway which regulates the Duox-dependent gut epithelial immune response to bacterial uracil; required for endosome formation in the enterocyte and activating norpA-dependent Ca2+ mobilization, which are essential steps in the Duox-dependent production of reactive oxygen species (ROS) in response to intestinal bacterial infection. The chain is Cadherin-99C from Drosophila melanogaster (Fruit fly).